A 162-amino-acid polypeptide reads, in one-letter code: Phosphopantetheine adenylyltransferase (162 aa).

Substrate is bound at residue Thr10. ATP contacts are provided by residues 10–11 (TF) and His18. The substrate site is built by Lys42, Leu74, and Arg88. ATP contacts are provided by residues 89–91 (GLR), Glu99, and 124–130 (YAFLSSS).

Belongs to the bacterial CoaD family. As to quaternary structure, homohexamer. Mg(2+) serves as cofactor.

The protein resides in the cytoplasm. The catalysed reaction is (R)-4'-phosphopantetheine + ATP + H(+) = 3'-dephospho-CoA + diphosphate. It participates in cofactor biosynthesis; coenzyme A biosynthesis; CoA from (R)-pantothenate: step 4/5. In terms of biological role, reversibly transfers an adenylyl group from ATP to 4'-phosphopantetheine, yielding dephospho-CoA (dPCoA) and pyrophosphate. The sequence is that of Phosphopantetheine adenylyltransferase from Methylococcus capsulatus (strain ATCC 33009 / NCIMB 11132 / Bath).